The chain runs to 424 residues: Histidine--tRNA ligase (424 aa).

It belongs to the class-II aminoacyl-tRNA synthetase family. Homodimer.

Its subcellular location is the cytoplasm. The enzyme catalyses tRNA(His) + L-histidine + ATP = L-histidyl-tRNA(His) + AMP + diphosphate + H(+). This Marinomonas sp. (strain MWYL1) protein is Histidine--tRNA ligase.